The chain runs to 353 residues: uncharacterized protein (353 aa).

This sequence belongs to the MG067/MG068/MG395 family.

This is an uncharacterized protein from Mycoplasma pneumoniae (strain ATCC 29342 / M129 / Subtype 1) (Mycoplasmoides pneumoniae).